The sequence spans 216 residues: Putative flagellar filament outer layer-like protein (216 aa).

Residues 1-22 (MFAQDAAQTGEQTTQNQGENGN) are disordered. The span at 8–22 (QTGEQTTQNQGENGN) shows a compositional bias: low complexity.

It is found in the periplasmic flagellum. The protein resides in the periplasm. Functionally, might be part of the flagella. The protein is Putative flagellar filament outer layer-like protein (flaAL) of Brachyspira hyodysenteriae (strain ATCC 49526 / WA1).